The following is a 187-amino-acid chain: Thioredoxin F, chloroplastic (187 aa).

The transit peptide at 1–72 directs the protein to the chloroplast; the sequence is MALRLSVSSS…GSDTATVGAE (72 aa). Residues 73–186 form the Thioredoxin domain; that stretch reads AEAVAVTGQV…LIQAIETVKS (114 aa). Active-site nucleophile residues include Cys-111 and Cys-114. A disulfide bond links Cys-111 and Cys-114.

The protein belongs to the thioredoxin family. Plant F-type subfamily.

It localises to the plastid. Its subcellular location is the chloroplast. Its function is as follows. Thiol-disulfide oxidoreductase involved in the redox regulation of enzymes of both reductive pentose phosphate pathway (Calvin-Benson cycle) and oxidative pentose phosphate pathway. The protein is Thioredoxin F, chloroplastic of Oryza sativa subsp. japonica (Rice).